The sequence spans 242 residues: MSFYDDQSGNLSPQRKLGRGKIEIKRIENTTNRQVTFCKRRNGLLKKAYELSVLCDAEVALIVFSTRGRLYEYANNSVKGTIERYKKACTDSPNTSSVSEANAQFYQQEASKLRQEISSIQKNNRNMMGESLGSLTVRDLKGLETKLEKGISRIRSKKNELLFAEIEYMQKKEIDLHNNNQYLRAKIAENERAQQHMNLMPGSSDYELAPPQSFDGRNYIQLNGLQPNNHYSRQDQTALQLV.

The 55-residue stretch at 19 to 73 folds into the MADS-box domain; the sequence is RGKIEIKRIENTTNRQVTFCKRRNGLLKKAYELSVLCDAEVALIVFSTRGRLYEY. Positions 103–193 constitute a K-box domain; it reads AQFYQQEASK…RAKIAENERA (91 aa).

Flower. Preferentially expressed in stamen and carpel and weakly in petal. Undetected in leaves and roots.

Its subcellular location is the nucleus. Probable transcription factor involved in regulating genes that determines stamen and carpel development in wild-type flowers. This chain is Floral homeotic protein AGAMOUS (AG2), found in Panax ginseng (Korean ginseng).